A 356-amino-acid polypeptide reads, in one-letter code: Heparan sulfate 2-O-sulfotransferase 1 (356 aa).

Over 1-11 the chain is Cytoplasmic; the sequence is MGLLRIMMPPK. A helical; Signal-anchor for type II membrane protein transmembrane segment spans residues 12–28; the sequence is LQLLAVVAFAVAMLFLE. Residues 24-51 adopt a coiled-coil conformation; sequence MLFLENQIQKLEESRAKLERAIARHEVR. At 29-356 the chain is on the lumenal side; it reads NQIQKLEESR…FYEKIYPKSN (328 aa). Positions 83, 84, 85, 86, 87, and 88 each coordinate adenosine 3',5'-bisphosphate. Residues asparagine 108 and asparagine 127 are each glycosylated (N-linked (GlcNAc...) asparagine). Residues histidine 140 and histidine 142 contribute to the active site. Arginine 164 and serine 172 together coordinate adenosine 3',5'-bisphosphate. 2 cysteine pairs are disulfide-bonded: cysteine 201–cysteine 209 and cysteine 222–cysteine 228. Residues tyrosine 279, serine 285, threonine 290, and lysine 293 each contribute to the adenosine 3',5'-bisphosphate site.

This sequence belongs to the sulfotransferase 3 family. Homotrimer. Interacts with the C5-epimerase GLCE. Post-translationally, N-glycosylated.

Its subcellular location is the golgi apparatus membrane. In terms of biological role, catalyzes the transfer of a sulfo group from 3'-phospho-5'-adenylyl sulfate (PAPS) to the 2-OH position of iduronic acid (IdoA) or glucuronic acid (GlcA) within the heparan sulfate (HS) chain and participates in HS biosynthesis. Required for metanephric development of kidney formation, suggesting that 2-O-sulfation within HS is essential for signaling between ureteric bud and metanephric mesenchyme. This Cricetulus griseus (Chinese hamster) protein is Heparan sulfate 2-O-sulfotransferase 1.